Here is a 91-residue protein sequence, read N- to C-terminus: Acylphosphatase (91 aa).

Residues 4–91 (RAMVTVKGMV…GEFDDFHIAY (88 aa)) enclose the Acylphosphatase-like domain. Active-site residues include Arg19 and Asn37.

The protein belongs to the acylphosphatase family.

It catalyses the reaction an acyl phosphate + H2O = a carboxylate + phosphate + H(+). In Geotalea uraniireducens (strain Rf4) (Geobacter uraniireducens), this protein is Acylphosphatase (acyP).